The chain runs to 131 residues: Jacalin-related lectin 15 (131 aa).

Residues M1–P126 form the Jacalin-type lectin domain.

Belongs to the jacalin lectin family. In terms of tissue distribution, expressed in the vascular and surrounding tissues in cotyledons. Detected in root apical meristems.

In Arabidopsis thaliana (Mouse-ear cress), this protein is Jacalin-related lectin 15 (JAL15).